The sequence spans 269 residues: uncharacterized protein (269 aa).

5 helical membrane passes run F65–M85, V156–V176, Y182–F202, M206–W226, and T242–F262. The Di-lysine motif signature appears at K266 to W269.

This sequence belongs to the SURF4 family.

The protein resides in the membrane. This is an uncharacterized protein from Caenorhabditis elegans.